A 208-amino-acid chain; its full sequence is Small ribosomal subunit protein uS4 (208 aa).

The interval 31-50 is disordered; that stretch reads SALDKRAYGPGQHGQRRTKT. The S4 RNA-binding domain maps to 98 to 161; that stretch reads RRLDNVVYRM…KSNPQVVRAM (64 aa).

It belongs to the universal ribosomal protein uS4 family. In terms of assembly, part of the 30S ribosomal subunit. Contacts protein S5. The interaction surface between S4 and S5 is involved in control of translational fidelity.

Its function is as follows. One of the primary rRNA binding proteins, it binds directly to 16S rRNA where it nucleates assembly of the body of the 30S subunit. With S5 and S12 plays an important role in translational accuracy. This is Small ribosomal subunit protein uS4 from Helicobacter pylori (strain J99 / ATCC 700824) (Campylobacter pylori J99).